A 113-amino-acid chain; its full sequence is Molt-inhibiting hormone (113 aa).

Positions Met-1–Ala-35 are cleaved as a signal peptide. 3 disulfides stabilise this stretch: Cys-42–Cys-79, Cys-59–Cys-75, and Cys-62–Cys-88.

The protein belongs to the arthropod CHH/MIH/GIH/VIH hormone family.

It is found in the secreted. Functionally, inhibits Y-organs where molting hormone (ecdysteroid) is secreted. A molting cycle is initiated when MIH secretion diminishes or stops. This chain is Molt-inhibiting hormone, found in Callinectes sapidus (Blue crab).